Reading from the N-terminus, the 1171-residue chain is DNA-directed RNA polymerase subunit beta' (1171 aa).

Zn(2+) contacts are provided by C60, C62, C75, and C78. The segment at 299–319 is disordered; that stretch reads GRRGKPVTGPGNRPLKSLSDM. Mg(2+) contacts are provided by D449, D451, and D453. Residues C790, C864, C871, and C874 each contribute to the Zn(2+) site.

Belongs to the RNA polymerase beta' chain family. As to quaternary structure, the RNAP catalytic core consists of 2 alpha, 1 beta, 1 beta' and 1 omega subunit. When a sigma factor is associated with the core the holoenzyme is formed, which can initiate transcription. It depends on Mg(2+) as a cofactor. Zn(2+) serves as cofactor.

It carries out the reaction RNA(n) + a ribonucleoside 5'-triphosphate = RNA(n+1) + diphosphate. Functionally, DNA-dependent RNA polymerase catalyzes the transcription of DNA into RNA using the four ribonucleoside triphosphates as substrates. The chain is DNA-directed RNA polymerase subunit beta' from Alkaliphilus metalliredigens (strain QYMF).